Reading from the N-terminus, the 576-residue chain is RNA-binding post-transcriptional regulator cip2 (576 aa).

Residues 232 to 310 (TAIVIKNIPF…RRLRVEWKRQ (79 aa)) enclose the RRM domain. The region spanning 355-420 (DPAILNVYSH…AKQVVITMPS (66 aa)) is the R3H domain.

Interacts with csx1. Phosphorylated by sty1.

It localises to the cytoplasm. In terms of biological role, regulates global gene expression after oxidative stress. Interacts and stabilizes mRNAs and may regulate their transition between different cytoplasmic components after oxidative stress. This Schizosaccharomyces pombe (strain 972 / ATCC 24843) (Fission yeast) protein is RNA-binding post-transcriptional regulator cip2 (cip2).